We begin with the raw amino-acid sequence, 717 residues long: MDKDAKNLTALEAERELEWLAKEIARHDVLYNNHDQPEISDARYDALRRRNIEIETLFPELVRADSPSYKVGAPISERFEKSVHAQAMLSLDNAFSSEDVHEFVERVRRFLRLPVTKTLEMTAEPKIDGLSLSLRYEKGKLVCAATRGDGYVGENVTVNARTLSDIPQVLQGDFPDILEVRGEVYMRHSDFQDLNVDQQEKGKLVFANPRNAAAGSLRQLDTRMTARRKLKFFAYGWGEVSEMPAKSQMEMVKKLKEYGFVINPLTKVFKAVEDLISYYHFIEEGRQHLDYDIDGVVYKVNDLLLQTRLGNVSRSPRWAIAHKFPAEKAMALLENIDIQIGRTGALTPVARLAPITVGGVVVTNASLHNEDYIKGLGSKSESIREGRDIRIGDTVIVQRAGDVIPQIIDVIIEKRPKGASPFVFPSLCPACGSHAVREVGEAVRRCTGGLICPAQAIERIRHFVSRNAFDIEGLGEKQVEFFFHAQDETLRIHSPADIFTLQKRQEKSLTRLENMEGFGTLSVRKLYDAINARRKIPLSRFLFALGIRHVGEVNARRLARAYQNYNAFETVAMTALMPCNKEDKGNEEWLELTSIEGIGVRVGKAIIDFYQETHNRDVLSSLLQEVTPLPEEAAVADYSPVAGKTIVFTGTLVHMSRDEVKALAERLGAKASSSISKKTDLLVAGIGAGSKLTKAKELGIEIMDEESWLQLINEHHI.

NAD(+) is bound by residues 41-45 (DARYD), 90-91 (SL), and Glu-124. Catalysis depends on Lys-126, which acts as the N6-AMP-lysine intermediate. Residues Arg-147, Glu-183, Lys-299, and Lys-323 each coordinate NAD(+). The Zn(2+) site is built by Cys-428, Cys-431, Cys-446, and Cys-452. The BRCT domain maps to 636–717 (ADYSPVAGKT…WLQLINEHHI (82 aa)).

This sequence belongs to the NAD-dependent DNA ligase family. LigA subfamily. The cofactor is Mg(2+). It depends on Mn(2+) as a cofactor.

It carries out the reaction NAD(+) + (deoxyribonucleotide)n-3'-hydroxyl + 5'-phospho-(deoxyribonucleotide)m = (deoxyribonucleotide)n+m + AMP + beta-nicotinamide D-nucleotide.. Its function is as follows. DNA ligase that catalyzes the formation of phosphodiester linkages between 5'-phosphoryl and 3'-hydroxyl groups in double-stranded DNA using NAD as a coenzyme and as the energy source for the reaction. It is essential for DNA replication and repair of damaged DNA. In Bartonella bacilliformis (strain ATCC 35685 / KC583 / Herrer 020/F12,63), this protein is DNA ligase.